A 193-amino-acid chain; its full sequence is uncharacterized protein (193 aa).

This is an uncharacterized protein from Haemophilus influenzae (strain ATCC 51907 / DSM 11121 / KW20 / Rd).